Reading from the N-terminus, the 112-residue chain is Large ribosomal subunit protein uL24 (112 aa).

The protein belongs to the universal ribosomal protein uL24 family. In terms of assembly, part of the 50S ribosomal subunit.

One of two assembly initiator proteins, it binds directly to the 5'-end of the 23S rRNA, where it nucleates assembly of the 50S subunit. Functionally, one of the proteins that surrounds the polypeptide exit tunnel on the outside of the subunit. The protein is Large ribosomal subunit protein uL24 of Magnetococcus marinus (strain ATCC BAA-1437 / JCM 17883 / MC-1).